The sequence spans 148 residues: Prefoldin subunit 2 (148 aa).

Residues 87 to 114 adopt a coiled-coil conformation; it reads KDGLEEVVRKLYETLEKKKKDLTEFEAK. Residues 122-134 show a composition bias toward basic and acidic residues; it reads QEDNKEGGNKKEG. The interval 122-148 is disordered; sequence QEDNKEGGNKKEGNAQGVLVGAASSSQ.

It belongs to the prefoldin subunit beta family. In terms of assembly, heterohexamer of two PFD-alpha type and four PFD-beta type subunits forming prefoldin co-chaperone complex. Interacts with LSM8, a specific subunit of the LSM2-8 complex, which is a core component of the spliceosome.

The protein localises to the cytoplasm. The protein resides in the nucleus. Its function is as follows. Binds specifically to cytosolic chaperonin (c-CPN) and transfers target proteins to it. Binds to nascent polypeptide chain and promotes folding in an environment in which there are many competing pathways for nonnative proteins. Together with other chaperonins, contribute to the regulation of gene expression by modulating the spliceosome function on pre-mRNA splicing post-transcriptionally by acting as a co-chaperone of Hsp90 to control levels of LSM8. Required for microtubules (MTs) organization and dynamicity. Involved in the process leading to microtubules dissociation in response to gibberellic acid (GA) probably due to the DELLA proteins-mediated translocation of the prefoldin co-chaperone complex from the cytoplasm to the nucleus. In Arabidopsis thaliana (Mouse-ear cress), this protein is Prefoldin subunit 2.